A 137-amino-acid polypeptide reads, in one-letter code: Large ribosomal subunit protein uL14 (137 aa).

Belongs to the universal ribosomal protein uL14 family. In terms of assembly, part of the 50S ribosomal subunit. Forms a cluster with proteins L3 and L24e, part of which may contact the 16S rRNA in 2 intersubunit bridges.

Its function is as follows. Binds to 23S rRNA. Forms part of two intersubunit bridges in the 70S ribosome. This Ignicoccus hospitalis (strain KIN4/I / DSM 18386 / JCM 14125) protein is Large ribosomal subunit protein uL14.